A 533-amino-acid polypeptide reads, in one-letter code: NAD(P)H-quinone oxidoreductase chain 4 2 (533 aa).

A run of 14 helical transmembrane segments spans residues 5–25 (FPWLTVLTLLPLVAAFFIPVL), 33–53 (VRWYALAIALLEFGLSAMVFW), 86–106 (LAVPLILLTGLVNTLAIFAAW), 114–134 (LFYFLMLALYSAQIGVFAAQD), 135–155 (LILFFLIWELELVPVYLLISI), 168–188 (FILYTAVGSLFILIAGLGMAF), 208–228 (ALELLAYAGFLIAFGVKLPIF), 242–262 (SAPVSMVLAGVLLKMGGYGLI), 276–296 (FAPVLIALGVVNIIYGALTAF), 310–330 (ISHMGFVLLGIGALNGIGLNG), 331–351 (AMLQMLSHGLIAAVLFFLAGV), 384–404 (ASLALPGMSGFVSELTVFLGL), 416–436 (VGVIFLAAVGVIITPVYLLSM), and 462–482 (TFIALSLLVPIIAVGMYPKVA).

This sequence belongs to the complex I subunit 4 family.

The protein resides in the cellular thylakoid membrane. The enzyme catalyses a plastoquinone + NADH + (n+1) H(+)(in) = a plastoquinol + NAD(+) + n H(+)(out). It carries out the reaction a plastoquinone + NADPH + (n+1) H(+)(in) = a plastoquinol + NADP(+) + n H(+)(out). Functionally, NDH-1 shuttles electrons from NAD(P)H, via FMN and iron-sulfur (Fe-S) centers, to quinones in the respiratory chain. The immediate electron acceptor for the enzyme in this species is believed to be plastoquinone. Couples the redox reaction to proton translocation (for every two electrons transferred, four hydrogen ions are translocated across the cytoplasmic membrane), and thus conserves the redox energy in a proton gradient. The chain is NAD(P)H-quinone oxidoreductase chain 4 2 from Thermosynechococcus vestitus (strain NIES-2133 / IAM M-273 / BP-1).